The primary structure comprises 156 residues: Ribosomal RNA large subunit methyltransferase H (156 aa).

Residues Leu73, Gly104, and 123–128 (LSALTL) contribute to the S-adenosyl-L-methionine site.

It belongs to the RNA methyltransferase RlmH family. In terms of assembly, homodimer.

It is found in the cytoplasm. The catalysed reaction is pseudouridine(1915) in 23S rRNA + S-adenosyl-L-methionine = N(3)-methylpseudouridine(1915) in 23S rRNA + S-adenosyl-L-homocysteine + H(+). Specifically methylates the pseudouridine at position 1915 (m3Psi1915) in 23S rRNA. The sequence is that of Ribosomal RNA large subunit methyltransferase H from Shewanella pealeana (strain ATCC 700345 / ANG-SQ1).